We begin with the raw amino-acid sequence, 307 residues long: Potassium channel subfamily K member 7 (307 aa).

Topologically, residues 1 to 10 (MGGLRPWSRY) are cytoplasmic. The helical transmembrane segment at 11-31 (GLLVVAHLLALGLGAVVFQAL) threads the bilayer. N-linked (GlcNAc...) asparagine glycosylation is present at N83. Positions 92–119 (LPSALLFAASILTTTGYGHMAPLSPGGK) form an intramembrane region, pore-forming. The helical transmembrane segment at 120–140 (AFCMVYAALGLPASLALVATL) threads the bilayer. The Cytoplasmic portion of the chain corresponds to 141–170 (RHCLLPVLSRPRAWVAVHWQLSPARAALLQ). A helical transmembrane segment spans residues 171–191 (AVALGLLVASSFVLLPALVLW). Positions 199–227 (LLGAVYFCFSSLSTIGLEDLLPGRGRSLH) form an intramembrane region, pore-forming. The chain crosses the membrane as a helical span at residues 233–253 (LGQLALLGYLLLGLLAMLLAV). At 254–307 (ETFSELPQVRAMGKFFRPSGPVTAEDQGGILGQDELALSTLPPAAPASGQAPAC) the chain is on the cytoplasmic side.

It belongs to the two pore domain potassium channel (TC 1.A.1.8) family. As to quaternary structure, homodimer.

The protein localises to the membrane. Probable potassium channel subunit. No channel activity observed in vitro as protein remains in the endoplasmic reticulum. May need to associate with an as yet unknown partner in order to reach the plasma membrane. The sequence is that of Potassium channel subfamily K member 7 (KCNK7) from Homo sapiens (Human).